The following is a 379-amino-acid chain: Cytokine receptor common subunit gamma (379 aa).

The signal sequence occupies residues 1-22 (MLKPPLPLRSLLFLQLPLLGVG). Topologically, residues 23-269 (LNPKFLTPSG…ENIENPENPS (247 aa)) are extracellular. Cys68 and Cys78 form a disulfide bridge. N-linked (GlcNAc...) asparagine glycans are attached at residues Asn77, Asn81, and Asn90. Cys109 and Cys122 are disulfide-bonded. The Fibronectin type-III domain occupies 163–260 (APENLTLRNL…IHWGSNTSKE (98 aa)). Asn166 and Asn171 each carry an N-linked (GlcNAc...) asparagine glycan. Residues 244 to 248 (WSDWS) carry the WSXWS motif motif. The chain crosses the membrane as a helical span at residues 270–290 (LFALEAVLIPLGSMGLIVSLI). Over 291-379 (CVYCWLERTM…PPCYTLKPEP (89 aa)) the chain is Cytoplasmic. The short motif at 299-307 (TMPRIPTLK) is the Box 1 motif element. Phosphothreonine is present on Thr305. A disordered region spans residues 349–370 (PPKGGEGPGGSPCSQHSPYWAP).

This sequence belongs to the type I cytokine receptor family. Type 5 subfamily. The gamma subunit is common to the IL2, IL4, IL7, IL15, IL21 and probably also the IL13 receptors. Interacts with SHB upon interleukin stimulation.

Its subcellular location is the cell membrane. The protein resides in the cell surface. In terms of biological role, common subunit for the receptors for a variety of interleukins. Probably in association with IL15RA, involved in the stimulation of neutrophil phagocytosis by IL15. The polypeptide is Cytokine receptor common subunit gamma (IL2RG) (Bos taurus (Bovine)).